The following is a 508-amino-acid chain: Photosystem II CP47 reaction center protein (508 aa).

Transmembrane regions (helical) follow at residues 21-36 (SVHIMHTALVSGWAGS), 101-115 (IVFSGLCFLAAIWHW), 140-156 (GIHLFLSGVACFGFGAF), 203-218 (IAAGTLGILAGLFHLS), 237-252 (VLSSSIAAVFFAAFVV), and 457-472 (SFALLFFFGHIWHGAR).

This sequence belongs to the PsbB/PsbC family. PsbB subfamily. PSII is composed of 1 copy each of membrane proteins PsbA, PsbB, PsbC, PsbD, PsbE, PsbF, PsbH, PsbI, PsbJ, PsbK, PsbL, PsbM, PsbT, PsbX, PsbY, PsbZ, Psb30/Ycf12, at least 3 peripheral proteins of the oxygen-evolving complex and a large number of cofactors. It forms dimeric complexes. Binds multiple chlorophylls. PSII binds additional chlorophylls, carotenoids and specific lipids. is required as a cofactor.

The protein resides in the plastid. It is found in the chloroplast thylakoid membrane. Functionally, one of the components of the core complex of photosystem II (PSII). It binds chlorophyll and helps catalyze the primary light-induced photochemical processes of PSII. PSII is a light-driven water:plastoquinone oxidoreductase, using light energy to abstract electrons from H(2)O, generating O(2) and a proton gradient subsequently used for ATP formation. In Nuphar advena (Common spatterdock), this protein is Photosystem II CP47 reaction center protein.